The sequence spans 361 residues: Protein-L-isoaspartate O-methyltransferase domain-containing protein 2 (361 aa).

A lipid anchor (N-myristoyl glycine) is attached at Gly2. Ser64 is a catalytic residue. AdoMet binding motif regions lie at residues 85–94 (LNLGSGTGYL), 160–164 (YDRVY), and 181–191 (LKVGGILVMPL). Residues 240 to 250 (VRSLQDLARIA) form a BC-box region. The segment at 303-336 (SNPSDDNSCEDLEEERREEEEKTPPETKPDPPVN) is disordered. Acidic residues predominate over residues 309–320 (NSCEDLEEERRE). Residues 321-331 (EEEKTPPETKP) show a composition bias toward basic and acidic residues. A CUL-box region spans residues 345–348 (LPLP).

It belongs to the methyltransferase superfamily. L-isoaspartyl/D-aspartyl protein methyltransferase family.

It is found in the cytoplasm. Its function is as follows. May act as a substrate recognition component of an ECS (Elongin BC-CUL5-SOCS-box protein) E3 ubiquitin ligase complex which mediates the ubiquitination and subsequent proteasomal degradation of target proteins. May bind to the methyltransferase cofactor S-adenosylmethionine (AdoMet) via the N-terminal AdoMet binding motif, but probably does not display methyltransferase activity. This chain is Protein-L-isoaspartate O-methyltransferase domain-containing protein 2 (PCMTD2), found in Homo sapiens (Human).